A 110-amino-acid polypeptide reads, in one-letter code: ATP-dependent Clp protease adapter protein ClpS (110 aa).

The protein belongs to the ClpS family. As to quaternary structure, binds to the N-terminal domain of the chaperone ClpA.

In terms of biological role, involved in the modulation of the specificity of the ClpAP-mediated ATP-dependent protein degradation. The protein is ATP-dependent Clp protease adapter protein ClpS of Bartonella quintana (strain Toulouse) (Rochalimaea quintana).